Reading from the N-terminus, the 557-residue chain is Organic cation/carnitine transporter 2 (557 aa).

Residues 1 to 20 are Cytoplasmic-facing; that stretch reads MRDYDEVTAFLGEWGPFQRL. A helical membrane pass occupies residues 21–41; that stretch reads IFFLLSASIIPNGFTGLSSVF. The Extracellular segment spans residues 42–142; that stretch reads LIATPEHRCR…NLVCEDDWKA (101 aa). N-linked (GlcNAc...) asparagine glycans are attached at residues N57, N64, and N91. The chain crosses the membrane as a helical span at residues 143 to 163; it reads PLTISLFFVGVLLGSFISGQL. Topologically, residues 164 to 172 are cytoplasmic; sequence SDRFGRKNV. A helical membrane pass occupies residues 173-193; that stretch reads LFVTMGMQTGFSFLQIFSKNF. At 194 to 197 the chain is on the extracellular side; the sequence is EMFV. Residues 198 to 218 traverse the membrane as a helical segment; that stretch reads VLFVLVGMGQISNYVAAFVLG. 218 to 225 is a binding site for ATP; the sequence is GTEILGKS. At 219 to 232 the chain is on the cytoplasmic side; it reads TEILGKSVRIIFST. A helical membrane pass occupies residues 233-253; sequence LGVCIFYAFGYMVLPLFAYFI. The Extracellular segment spans residues 254-257; the sequence is RDWR. The helical transmembrane segment at 258-278 threads the bilayer; it reads MLLVALTMPGVLCVALWWFIP. The Cytoplasmic segment spans residues 279–341; sequence ESPRWLISQG…LDLLRTWNIR (63 aa). The chain crosses the membrane as a helical span at residues 342–362; sequence MVTIMSIMLWMTISVGYFGLS. Residues 363–373 lie on the Extracellular side of the membrane; the sequence is LDTPNLHGDIF. A helical transmembrane segment spans residues 374 to 394; it reads VNCFLSAMVEVPAYVLAWLLL. The Cytoplasmic portion of the chain corresponds to 395-406; the sequence is QYLPRRYSMATA. A helical membrane pass occupies residues 407–427; that stretch reads LFLGGSVLLFMQLVPPDLYYL. The Extracellular segment spans residues 428-430; the sequence is ATV. The chain crosses the membrane as a helical span at residues 431–451; that stretch reads LVMVGKFGVTAAFSMVYVYTA. At 452–462 the chain is on the cytoplasmic side; that stretch reads ELYPTVVRNMG. A helical transmembrane segment spans residues 463 to 483; sequence VGVSSTASRLGSILSPYFVYL. Residues 484–488 lie on the Extracellular side of the membrane; sequence GAYDR. At Y486 the chain carries Phosphotyrosine. The helical transmembrane segment at 489–509 threads the bilayer; that stretch reads FLPYILMGSLTILTAILTLFL. The tract at residues 535 to 557 is disordered; sequence TPSHTRMLKDGQERPTILKSTAF. Position 550 is a phosphothreonine (T550).

The protein belongs to the major facilitator (TC 2.A.1) superfamily. Organic cation transporter (TC 2.A.1.19) family. In terms of assembly, interacts with PDZK1. In terms of processing, glycosylated. Glycosylation affects the expression levels. Not glycosylated. As to expression, strongly expressed in kidney, skeletal muscle, heart and placenta. Primarily expressed by surface epithelial cells of the colon (at protein level). Expressed in CD68 macrophage and CD43 T-cells but not in CD20 B-cells. In testis, localized to Sertoli cell basal membranes, peritubular myoid cells and Leydig cells.

Its subcellular location is the cell membrane. It is found in the apical cell membrane. The protein resides in the basal cell membrane. It localises to the endoplasmic reticulum. The catalysed reaction is (R)-carnitine(out) + Na(+)(out) = (R)-carnitine(in) + Na(+)(in). The enzyme catalyses glycine betaine(out) + Na(+)(out) = glycine betaine(in) + Na(+)(in). It catalyses the reaction glycine betaine(out) + (R)-carnitine(in) = glycine betaine(in) + (R)-carnitine(out). It carries out the reaction O-butanoyl-(R)-carnitine(out) + Na(+)(out) = O-butanoyl-(R)-carnitine(in) + Na(+)(in). The catalysed reaction is O-acetyl-(R)-carnitine(out) + Na(+)(out) = O-acetyl-(R)-carnitine(in) + Na(+)(in). The enzyme catalyses O-propanoyl-(R)-carnitine(out) + Na(+)(out) = O-propanoyl-(R)-carnitine(in) + Na(+)(in). It catalyses the reaction (S)-carnitine(out) + Na(+)(out) = (S)-carnitine(in) + Na(+)(in). It carries out the reaction an O-acyl-(R)-carnitine(out) + Na(+)(out) = an O-acyl-(R)-carnitine(in) + Na(+)(in). The catalysed reaction is L-glutamyl-L-arginyl-glycyl-L-methionyl-L-threonine(out) + Na(+)(out) = L-glutamyl-L-arginyl-glycyl-L-methionyl-L-threonine(in) + Na(+)(in). The enzyme catalyses N,N-dimethylglycine(out) + Na(+)(out) = N,N-dimethylglycine(in) + Na(+)(in). With respect to regulation, inhibited by emetine, quinidine and verapamil. The IC(50) of emetine is 4.2 uM. Not inhibited by valproic acid. Transport of (R)-carnitine is stimulated by cholesterol in the plasma membrane. Sodium-ion dependent, high affinity carnitine transporter. Involved in the active cellular uptake of carnitine. Transports one sodium ion with one molecule of carnitine. Also transports organic cations such as tetraethylammonium (TEA) without the involvement of sodium. Relative uptake activity ratio of carnitine to TEA is 11.3. In intestinal epithelia, transports the quorum-sensing pentapeptide CSF (competence and sporulation factor) from B.subtilis which induces cytoprotective heat shock proteins contributing to intestinal homeostasis. May also contribute to regulate the transport of organic compounds in testis across the blood-testis-barrier. Its function is as follows. Retained in the ER, unable to perform carnitine uptake. This chain is Organic cation/carnitine transporter 2, found in Homo sapiens (Human).